Consider the following 150-residue polypeptide: Ribosome maturation factor RimP (150 aa).

It belongs to the RimP family.

It is found in the cytoplasm. Functionally, required for maturation of 30S ribosomal subunits. This Salmonella dublin (strain CT_02021853) protein is Ribosome maturation factor RimP.